Here is a 277-residue protein sequence, read N- to C-terminus: 2-dehydro-3-deoxyphosphooctonate aldolase (277 aa).

It belongs to the KdsA family.

It is found in the cytoplasm. It carries out the reaction D-arabinose 5-phosphate + phosphoenolpyruvate + H2O = 3-deoxy-alpha-D-manno-2-octulosonate-8-phosphate + phosphate. It participates in carbohydrate biosynthesis; 3-deoxy-D-manno-octulosonate biosynthesis; 3-deoxy-D-manno-octulosonate from D-ribulose 5-phosphate: step 2/3. It functions in the pathway bacterial outer membrane biogenesis; lipopolysaccharide biosynthesis. The protein is 2-dehydro-3-deoxyphosphooctonate aldolase of Brucella canis (strain ATCC 23365 / NCTC 10854 / RM-666).